Here is a 629-residue protein sequence, read N- to C-terminus: Plastin-1 (629 aa).

The residue at position 1 (M1) is an N-acetylmethionine. EF-hand domains follow at residues 11–46 and 51–86; these read EELE…ASLP and KVRE…LKSK. Ca(2+) contacts are provided by D24, D26, S28, Y30, E35, D64, N66, D68, K70, and E75. 2 actin-binding regions span residues 108–380 and 381–625; these read TSTI…CLHK and PNNN…GKGL. 4 Calponin-homology (CH) domains span residues 122-238, 266-376, 395-504, and 516-625; these read EEEK…KVGL, LSPE…NTYP, SKEE…RRYT, and KVND…GKGL.

In terms of assembly, monomer. In terms of processing, phosphorylated. In terms of tissue distribution, in small intestine, colon, and kidney; relatively lower levels of expression are detected in the lung and stomach.

The protein resides in the cytoplasm. The protein localises to the cell projection. Its subcellular location is the stereocilium. Functionally, actin-bundling protein. In the inner ear, it is required for stereocilia formation. Mediates liquid packing of actin filaments that is necessary for stereocilia to grow to their proper dimensions. This Homo sapiens (Human) protein is Plastin-1 (PLS1).